The chain runs to 201 residues: Large ribosomal subunit protein uL4 (201 aa).

The interval 44-68 (KAQKTRSEVAGTTKKSKKQKGGGAR) is disordered.

Belongs to the universal ribosomal protein uL4 family. In terms of assembly, part of the 50S ribosomal subunit.

Functionally, one of the primary rRNA binding proteins, this protein initially binds near the 5'-end of the 23S rRNA. It is important during the early stages of 50S assembly. It makes multiple contacts with different domains of the 23S rRNA in the assembled 50S subunit and ribosome. In terms of biological role, forms part of the polypeptide exit tunnel. This Xanthomonas campestris pv. campestris (strain 8004) protein is Large ribosomal subunit protein uL4.